We begin with the raw amino-acid sequence, 282 residues long: Bis(5'-nucleosyl)-tetraphosphatase, symmetrical (282 aa).

This sequence belongs to the Ap4A hydrolase family.

The catalysed reaction is P(1),P(4)-bis(5'-adenosyl) tetraphosphate + H2O = 2 ADP + 2 H(+). In terms of biological role, hydrolyzes diadenosine 5',5'''-P1,P4-tetraphosphate to yield ADP. The chain is Bis(5'-nucleosyl)-tetraphosphatase, symmetrical from Escherichia coli O7:K1 (strain IAI39 / ExPEC).